The following is a 216-amino-acid chain: Protein-L-isoaspartate O-methyltransferase 1 (216 aa).

Residue S60 is part of the active site.

The protein belongs to the methyltransferase superfamily. L-isoaspartyl/D-aspartyl protein methyltransferase family.

The protein resides in the cytoplasm. The catalysed reaction is [protein]-L-isoaspartate + S-adenosyl-L-methionine = [protein]-L-isoaspartate alpha-methyl ester + S-adenosyl-L-homocysteine. Its function is as follows. Catalyzes the methyl esterification of L-isoaspartyl residues in peptides and proteins that result from spontaneous decomposition of normal L-aspartyl and L-asparaginyl residues. It plays a role in the repair and/or degradation of damaged proteins. This Archaeoglobus fulgidus (strain ATCC 49558 / DSM 4304 / JCM 9628 / NBRC 100126 / VC-16) protein is Protein-L-isoaspartate O-methyltransferase 1 (pcm1).